We begin with the raw amino-acid sequence, 147 residues long: Diaminohydroxyphosphoribosylamino-pyrimidine deaminase (147 aa).

The 122-residue stretch at 1 to 122 folds into the CMP/dCMP-type deaminase domain; sequence MKDRFYMTRA…LYLRKKGISV (122 aa). Position 50 (H50) interacts with Zn(2+). The active-site Proton donor is E52. Positions 75 and 84 each coordinate Zn(2+).

This sequence belongs to the cytidine and deoxycytidylate deaminase family. The cofactor is Zn(2+).

It catalyses the reaction 2,5-diamino-6-hydroxy-4-(5-phosphoribosylamino)-pyrimidine + H2O + H(+) = 5-amino-6-(5-phospho-D-ribosylamino)uracil + NH4(+). It participates in cofactor biosynthesis; riboflavin biosynthesis; 5-amino-6-(D-ribitylamino)uracil from GTP: step 2/4. This chain is Diaminohydroxyphosphoribosylamino-pyrimidine deaminase (ribD1), found in Buchnera aphidicola subsp. Schizaphis graminum (strain Sg).